We begin with the raw amino-acid sequence, 964 residues long: Protein translocase subunit SecA (964 aa).

Residues Q86, 104 to 108 (GEGKT), and D494 each bind ATP. A disordered region spans residues 848–964 (AESADTIAVA…YKMCHGQNEK (117 aa)). The span at 871–882 (AEGEVEEEDEDT) shows a compositional bias: acidic residues. The span at 889-900 (AESAAASGAGES) shows a compositional bias: low complexity. Zn(2+) is bound by residues C947, C949, C958, and H959.

Belongs to the SecA family. Monomer and homodimer. Part of the essential Sec protein translocation apparatus which comprises SecA, SecYEG and auxiliary proteins SecDF. Other proteins may also be involved. The cofactor is Zn(2+).

Its subcellular location is the cell membrane. The protein resides in the cytoplasm. The enzyme catalyses ATP + H2O + cellular proteinSide 1 = ADP + phosphate + cellular proteinSide 2.. Functionally, part of the Sec protein translocase complex. Interacts with the SecYEG preprotein conducting channel. Has a central role in coupling the hydrolysis of ATP to the transfer of proteins into and across the cell membrane, serving as an ATP-driven molecular motor driving the stepwise translocation of polypeptide chains across the membrane. The sequence is that of Protein translocase subunit SecA from Bifidobacterium longum (strain DJO10A).